We begin with the raw amino-acid sequence, 902 residues long: Adhesion G-protein coupled receptor D1 (902 aa).

The signal sequence occupies residues 1–25; the sequence is MKKLLPLCCWHSWLLLFYCDFQVRG. The Extracellular segment spans residues 26–598; sequence AHTRSHVHPG…GHQVALSSIS (573 aa). Asparagine 68, asparagine 76, asparagine 83, asparagine 89, asparagine 121, asparagine 183, asparagine 217, asparagine 310, asparagine 330, asparagine 337, asparagine 347, asparagine 422, asparagine 504, asparagine 529, and asparagine 561 each carry an N-linked (GlcNAc...) asparagine glycan. The region spanning 111 to 304 is the Pentraxin (PTX) domain; it reads KGVTFLYYRK…VNTMAPTNAY (194 aa). In terms of domain architecture, GAIN-B spans 399–585; sequence QVAIVGSSSM…AILMQVVPLE (187 aa). Disulfide bonds link cysteine 538-cysteine 567 and cysteine 555-cysteine 569. The tract at residues 538–585 is GPS; the sequence is CAFLDFSSGEGIWSNQGCALTEGNLSYSICRCTHLTNFAILMQVVPLE. A stachel region spans residues 574–582; sequence NFAILMQVV. Position 591 (glutamine 591) interacts with 17beta-hydroxy-5alpha-androstan-3-one. Residues 599 to 619 traverse the membrane as a helical segment; the sequence is YIGCSLSVLCLAITLVTFAVL. The Cytoplasmic segment spans residues 620–630; sequence SSVSTIRNQRY. A helical membrane pass occupies residues 631–651; sequence HIHANLSCAVLVAQVLLLISF. The Extracellular portion of the chain corresponds to 652 to 661; sequence RFEPGTAPCQ. Cysteine 660 and cysteine 732 are disulfide-bonded. A helical membrane pass occupies residues 662 to 682; it reads VLAMLLHYFFLSAFAWMLVEG. Residues 683–702 are Cytoplasmic-facing; it reads LHLYSMVIKVFGSEDSKHRY. The chain crosses the membrane as a helical span at residues 703 to 723; sequence YYGIGWGFPLLICIISIVFAM. Topologically, residues 724–739 are extracellular; the sequence is DSYGTSKNCWLSLGNG. The chain crosses the membrane as a helical span at residues 740-760; it reads AIWAFVAPALFIIVVNIGILI. Topologically, residues 761–788 are cytoplasmic; the sequence is AVTRVISQISAENYKIHGDPSAFKLTAK. Residues 789–809 form a helical membrane-spanning segment; that stretch reads AVAVLLPILGTSWVFGVLAVN. Residues 810-812 are Extracellular-facing; sequence NQA. Residues 813–833 traverse the membrane as a helical segment; sequence MVFQYMFAILNSLQGFFIFLF. Residues 834–902 are Cytoplasmic-facing; that stretch reads HCLLNSEVRA…SGHRVDLSAV (69 aa). The interval 865 to 902 is disordered; that stretch reads KPFSSDIMNGTRPATGSTRLSPWDKSSHSGHRVDLSAV. Residues 870–884 are compositionally biased toward polar residues; sequence DIMNGTRPATGSTRL. Positions 889–902 are enriched in basic and acidic residues; the sequence is KSSHSGHRVDLSAV.

This sequence belongs to the G-protein coupled receptor 2 family. Adhesion G-protein coupled receptor (ADGR) subfamily. Heterodimer of 2 chains generated by proteolytic processing; the large extracellular N-terminal fragment and the membrane-bound C-terminal fragment predominantly remain associated and non-covalently linked. Interacts with ESYT1; interaction takes place in absence of cytosolic calcium and inhibits the G protein-coupled receptor activity of ADGRD1. In terms of processing, autoproteolytically processed at the GPS region of the GAIN-B domain; this cleavage modulates receptor activity. Cleavage takes place early in the secretory pathway before N-glycosylation.

The protein resides in the cell membrane. With respect to regulation, forms a heterodimer of 2 chains generated by proteolytic processing that remain associated through non-covalent interactions mediated by the GAIN-B domain. In the inactivated receptor, the Stachel sequence (also named stalk) is embedded in the GAIN-B domain, where it adopts a beta-strand conformation. On activation, the Stachel moves into the 7 transmembrane region and adopts a twisted hook-shaped configuration that forms contacts within the receptor, leading to coupling of a G-alpha protein, which activates signaling. The cleaved GAIN-B and N-terminal domains can then dissociate from the rest of the receptor. Interaction with ESYT1 in absence of cytosolic calcium inhibits the G protein-coupled receptor activity; interaction and inhibition is relieved when cytosolic calcium increases. Functionally, adhesion G-protein coupled receptor (aGPCR) for androgen hormone 5alpha-dihydrotestosterone (5alpha-DHT), also named 17beta-hydroxy-5alpha-androstan-3-one, the most potent hormone among androgens. Also activated by methenolone drug. Ligand binding causes a conformation change that triggers signaling via guanine nucleotide-binding proteins (G proteins) and modulates the activity of downstream effectors, such as adenylate cyclase. ADGRD1 is coupled to G(s) G proteins and mediates activation of adenylate cyclase activity. Acts as a 5alpha-DHT receptor in muscle cells, thereby increasing intracellular cyclic AMP (cAMP) levels and enhancing muscle strength. In Bos taurus (Bovine), this protein is Adhesion G-protein coupled receptor D1 (ADGRD1).